A 1034-amino-acid polypeptide reads, in one-letter code: Glycine dehydrogenase (decarboxylating), mitochondrial (1034 aa).

The transit peptide at 1–63 (MERARRLAML…LNGFGSQVRT (63 aa)) directs the protein to the mitochondrion. Lys-770 is subject to N6-(pyridoxal phosphate)lysine.

This sequence belongs to the GcvP family. In terms of assembly, homodimer. The glycine cleavage system is composed of four proteins: P, T, L and H. The cofactor is pyridoxal 5'-phosphate.

It is found in the mitochondrion. It catalyses the reaction N(6)-[(R)-lipoyl]-L-lysyl-[glycine-cleavage complex H protein] + glycine + H(+) = N(6)-[(R)-S(8)-aminomethyldihydrolipoyl]-L-lysyl-[glycine-cleavage complex H protein] + CO2. The glycine cleavage system catalyzes the degradation of glycine. The P protein binds the alpha-amino group of glycine through its pyridoxal phosphate cofactor; CO(2) is released and the remaining methylamine moiety is then transferred to the lipoamide cofactor of the H protein. The chain is Glycine dehydrogenase (decarboxylating), mitochondrial (GDCSPA) from Flaveria trinervia (Clustered yellowtops).